An 84-amino-acid chain; its full sequence is Chymotrypsin inhibitor Ani s 6 (84 aa).

The signal sequence occupies residues 1–22 (MFQSTFFLVLMVCVATARFANK). Disulfide bonds link C25–C58, C34–C54, C38–C50, C42–C79, and C60–C73. Residues 25–79 (CPPNEEYNECGNPCQEKCDNGEPVICTYQCEHRCFCKQGYVRLTEDGECVPEEFC) enclose the TIL domain.

The protein belongs to the serine protease inhibitor-like (TIL domain-containing) family.

The protein localises to the secreted. Inhibits alpha-chymotrypsin, but not trypsin. This chain is Chymotrypsin inhibitor Ani s 6, found in Anisakis simplex (Herring worm).